We begin with the raw amino-acid sequence, 72 residues long: Bowman-Birk type proteinase inhibitor (72 aa).

Disulfide bonds link Cys8–Cys61, Cys9–Cys24, Cys12–Cys57, Cys14–Cys22, Cys31–Cys38, Cys35–Cys50, and Cys40–Cys48.

The protein belongs to the Bowman-Birk serine protease inhibitor family.

Functionally, this inhibitor has two domains, each with separate antiprotease activity. 1 mole of inhibitor inhibits either 1 mole of trypsin or 2 moles of chymotrypsin, stoichiometrically. This Vicia sativa subsp. nigra (Common vetch) protein is Bowman-Birk type proteinase inhibitor.